We begin with the raw amino-acid sequence, 253 residues long: uncharacterized protein (253 aa).

Belongs to the NAD(P)-dependent epimerase/dehydratase family.

This is an uncharacterized protein from Bacillus subtilis (strain 168).